Here is a 219-residue protein sequence, read N- to C-terminus: Large ribosomal subunit protein uL1 (219 aa).

It belongs to the universal ribosomal protein uL1 family. As to quaternary structure, part of the 50S ribosomal subunit.

Its function is as follows. Binds directly to 23S rRNA. Probably involved in E site tRNA release. In terms of biological role, protein L1 is also a translational repressor protein, it controls the translation of its operon by binding to its mRNA. This chain is Large ribosomal subunit protein uL1, found in Pyrococcus abyssi (strain GE5 / Orsay).